We begin with the raw amino-acid sequence, 310 residues long: Small ribosomal subunit protein uS2 (310 aa).

Disordered stretches follow at residues 213–240 (EEQAALARQQEEANAGTTAGFSEWGGAA) and 271–310 (WDSVAPGATDDWGAEPAAPSSDWGTAVTMQEQAKPSTDWA). Positions 216 to 227 (AALARQQEEANA) are enriched in low complexity. Residues 297-310 (VTMQEQAKPSTDWA) are compositionally biased toward polar residues.

Belongs to the universal ribosomal protein uS2 family. Component of the small ribosomal subunit. Mature ribosomes consist of a small (40S) and a large (60S) subunit. The 40S subunit contains about 33 different proteins and 1 molecule of RNA (18S). The 60S subunit contains about 49 different proteins and 3 molecules of RNA (28S, 5.8S and 5S). Interacts with ribosomal protein S21.

It localises to the cytoplasm. Required for the assembly and/or stability of the 40S ribosomal subunit. Required for the processing of the 20S rRNA-precursor to mature 18S rRNA in a late step of the maturation of 40S ribosomal subunits. The polypeptide is Small ribosomal subunit protein uS2 (Nematostella vectensis (Starlet sea anemone)).